The chain runs to 255 residues: Probable transcriptional regulatory protein CMM_1817 (255 aa).

Belongs to the TACO1 family.

It is found in the cytoplasm. This chain is Probable transcriptional regulatory protein CMM_1817, found in Clavibacter michiganensis subsp. michiganensis (strain NCPPB 382).